A 546-amino-acid chain; its full sequence is Protein FAM124A (546 aa).

Disordered stretches follow at residues 1 to 37 (MDPK…SELS), 286 to 360 (FPKP…FQRS), and 488 to 546 (SSSS…EFYI). Over residues 24 to 36 (SDYSHLSSTSSEL) the composition is skewed to low complexity. A compositionally biased stretch (basic residues) spans 286–302 (FPKPGRVHHASEKKRHS). Polar residues-rich tracts occupy residues 304–324 (PLPS…SPLN) and 347–360 (ANST…FQRS). Residues 488–511 (SSSSATARAAPPAPSTSTLTDSSP) show a composition bias toward low complexity.

It belongs to the FAM124 family.

This is Protein FAM124A (FAM124A) from Homo sapiens (Human).